The primary structure comprises 173 residues: 2-C-methyl-D-erythritol 2,4-cyclodiphosphate synthase (173 aa).

2 residues coordinate a divalent metal cation: aspartate 17 and histidine 19. Residues 17-19 and 49-50 each bind 4-CDP-2-C-methyl-D-erythritol 2-phosphate; these read DVH and HS. Histidine 57 is a binding site for a divalent metal cation. 4-CDP-2-C-methyl-D-erythritol 2-phosphate is bound by residues 76–80, 147–150, phenylalanine 154, and arginine 157; these read FPNTD and TTTE.

This sequence belongs to the IspF family. In terms of assembly, homotrimer. The cofactor is a divalent metal cation.

It carries out the reaction 4-CDP-2-C-methyl-D-erythritol 2-phosphate = 2-C-methyl-D-erythritol 2,4-cyclic diphosphate + CMP. It participates in isoprenoid biosynthesis; isopentenyl diphosphate biosynthesis via DXP pathway; isopentenyl diphosphate from 1-deoxy-D-xylulose 5-phosphate: step 4/6. In terms of biological role, involved in the biosynthesis of isopentenyl diphosphate (IPP) and dimethylallyl diphosphate (DMAPP), two major building blocks of isoprenoid compounds. Catalyzes the conversion of 4-diphosphocytidyl-2-C-methyl-D-erythritol 2-phosphate (CDP-ME2P) to 2-C-methyl-D-erythritol 2,4-cyclodiphosphate (ME-CPP) with a corresponding release of cytidine 5-monophosphate (CMP). The protein is 2-C-methyl-D-erythritol 2,4-cyclodiphosphate synthase of Ehrlichia chaffeensis (strain ATCC CRL-10679 / Arkansas).